The primary structure comprises 311 residues: MAAPRGPRALSAAAPGSGKPKLTHPGKAILAGGLAGGIEICITFPTEYVKTQLQLDERANPPRYRGIGDCVRQTVRSHGVLGLYRGLSSLLYGSIPKAAVRFGMFEFLSNHMRDAQGRLDSRRGLLCGLGAGVAEAVVVVCPMETIKVKFIHDQTSSNPKYRGFFHGVREIIREQGLKGTYQGLTATVLKQGSNQAIRFFVMTSLRNWYQGDNHNKPMNPLITGVFGATAGAASVFGNTPLDVIKTRMQGLEAHKYRNTLDCGLKILKNEGPKAFYKGTVPRLGRVCLDVAIVFIIYDEVVKLLNKVWKTD.

Residues 1-13 (MAAPRGPRALSAA) constitute a propeptide, removed in mature form. A disordered region spans residues 1-21 (MAAPRGPRALSAAAPGSGKPK). 3 Solcar repeats span residues 23–111 (THPG…LSNH), 122–208 (RRGL…LRNW), and 218–303 (MNPL…VVKL). 3 consecutive transmembrane segments (helical) span residues 29 to 46 (ILAGGLAGGIEICITFPT), 86 to 105 (GLSSLLYGSIPKAAVRFGMF), and 129 to 143 (LGAGVAEAVVVVCPM). S156 carries the post-translational modification Phosphoserine. Transmembrane regions (helical) follow at residues 183 to 202 (GLTATVLKQGSNQAIRFFVM), 224 to 241 (GVFGATAGAASVFGNTPL), and 278 to 297 (GTVPRLGRVCLDVAIVFIIY).

Belongs to the mitochondrial carrier (TC 2.A.29) family. Possesses a short cleavable presequence, which, however, is found to be dispensable both for targeting to mitochondria and insertion into the inner membrane. However, the presequence is required to keep SLC25A1 in a soluble state and thus in an import-competent state. Mature SLC25A1 lacking the presequence is prone to aggregation. Expressed minimally but ubiquitously throughout the adult brain. Detected at higher levels in the olfactory bulb, neocortex and cerebellum. Also expressed in a subset of large cells in the globus pallidus.

Its subcellular location is the mitochondrion inner membrane. The protein resides in the mitochondrion membrane. It catalyses the reaction (S)-malate(in) + citrate(out) = (S)-malate(out) + citrate(in). The catalysed reaction is D-threo-isocitrate(in) + citrate(out) = D-threo-isocitrate(out) + citrate(in). It carries out the reaction citrate(out) + succinate(in) = citrate(in) + succinate(out). The enzyme catalyses cis-aconitate(in) + citrate(out) = cis-aconitate(out) + citrate(in). It catalyses the reaction trans-aconitate(in) + citrate(out) = trans-aconitate(out) + citrate(in). The catalysed reaction is phosphoenolpyruvate(in) + citrate(out) = phosphoenolpyruvate(out) + citrate(in). It carries out the reaction maleate(in) + citrate(out) = maleate(out) + citrate(in). Its function is as follows. Mitochondrial electroneutral antiporter that exports citrate from the mitochondria into the cytosol in exchange for malate. Also able to mediate the exchange of citrate for isocitrate, phosphoenolpyruvate, cis-aconitate and to a lesser extent trans-aconitate, maleate and succinate. In the cytoplasm, citrate plays important roles in fatty acid and sterol synthesis, regulation of glycolysis, protein acetylation, and other physiopathological processes. In Mus musculus (Mouse), this protein is Tricarboxylate transport protein, mitochondrial.